The sequence spans 368 residues: N-succinylamino acid racemase (368 aa).

2-succinylbenzoate-binding positions include S135 and 161–163; that span reads KLK. The Proton donor role is filled by K163. Position 189 (D189) interacts with Mg(2+). N191 contacts 2-succinylbenzoate. 2 residues coordinate Mg(2+): E214 and D239. K263 (proton acceptor) is an active-site residue. I293 contributes to the 2-succinylbenzoate binding site.

The protein belongs to the mandelate racemase/muconate lactonizing enzyme family. MenC type 2 subfamily. Homooctamer. The cofactor is a divalent metal cation.

The catalysed reaction is N-acetyl-D-methionine = N-acetyl-L-methionine. The enzyme catalyses (1R,6R)-6-hydroxy-2-succinyl-cyclohexa-2,4-diene-1-carboxylate = 2-succinylbenzoate + H2O. With respect to regulation, inhibited by EDTA and sulfhydryl reagents such as p-chloromercuribenzoic acid. Both OSBS and NAAAR activities are inhibited competitively by salicylhydroxamate. Acts as a N-succinylamino acid racemase (NSAR) that catalyzes the racemization of N-succinyl-phenylglycine and N-succinyl-methionine. Can catalyze the racemization of a broad range of N-acylamino acids, including N-acetyl-D/L-methionine, N-propionyl-D/L-methionine, N-butyryl-D/L-methionine and N-chloroacetyl-L-valine. Also converts 2-succinyl-6-hydroxy-2,4-cyclohexadiene-1-carboxylate (SHCHC) to 2-succinylbenzoate (OSB). Catalyzes both N-succinylamino acid racemization and OSB synthesis at equivalent rates. NSAR is probably the biological function of this enzyme. This is N-succinylamino acid racemase from Amycolatopsis sp.